A 258-amino-acid chain; its full sequence is Phosphate import ATP-binding protein PstB (258 aa).

The 243-residue stretch at 5–247 (IETKDLDIYY…ERIFSNPKEK (243 aa)) folds into the ABC transporter domain. 37–44 (GPSGCGKS) lines the ATP pocket.

This sequence belongs to the ABC transporter superfamily. Phosphate importer (TC 3.A.1.7) family. In terms of assembly, the complex is composed of two ATP-binding proteins (PstB), two transmembrane proteins (PstC and PstA) and a solute-binding protein (PstS).

It is found in the cell membrane. It carries out the reaction phosphate(out) + ATP + H2O = ADP + 2 phosphate(in) + H(+). Functionally, part of the ABC transporter complex PstSACB involved in phosphate import. Responsible for energy coupling to the transport system. In Cutibacterium acnes (strain DSM 16379 / KPA171202) (Propionibacterium acnes), this protein is Phosphate import ATP-binding protein PstB.